The following is a 343-amino-acid chain: MIKLFHINKIFQQGARSINALSDISLHVPQGQIYGVIGSSGAGKSTLIRCVNMLERPTSGQVLVNGQDLTILSDSDLTRARRRIGMIFQHFNLLSSRTVFGNIALPLELDNIPKAEIKKRVDELLELVGLTDKHDAYPANLSGGQKQRVAIARALANSPKVLLCDEATSALDPATTRSILELLKDINRRLGLTILLITHEMDVVKRICDQVAVISGGQLIEQDIVSEVFSHPKTPIAQAFIQSTLHLDIPEDYVQKMQSHPAPNLSPLLKLEFTGQSVDAPLISMAVRRFNIDMNILSSQIDYAGGVKFGVMLAELHGENGGVESTIKFLQDHHVKVEVLGYV.

Residues 2–241 (IKLFHINKIF…PKTPIAQAFI (240 aa)) form the ABC transporter domain. 38–45 (GSSGAGKS) is an ATP binding site.

The protein belongs to the ABC transporter superfamily. Methionine importer (TC 3.A.1.24) family. In terms of assembly, the complex is composed of two ATP-binding proteins (MetN), two transmembrane proteins (MetI) and a solute-binding protein (MetQ).

Its subcellular location is the cell inner membrane. The catalysed reaction is L-methionine(out) + ATP + H2O = L-methionine(in) + ADP + phosphate + H(+). The enzyme catalyses D-methionine(out) + ATP + H2O = D-methionine(in) + ADP + phosphate + H(+). Functionally, part of the ABC transporter complex MetNIQ involved in methionine import. Responsible for energy coupling to the transport system. The sequence is that of Methionine import ATP-binding protein MetN from Photorhabdus laumondii subsp. laumondii (strain DSM 15139 / CIP 105565 / TT01) (Photorhabdus luminescens subsp. laumondii).